The following is a 59-amino-acid chain: DNA gyrase inhibitor YacG (59 aa).

Zn(2+)-binding residues include Cys9, Cys12, Cys27, and Cys31.

It belongs to the DNA gyrase inhibitor YacG family. As to quaternary structure, interacts with GyrB. Requires Zn(2+) as cofactor.

Inhibits all the catalytic activities of DNA gyrase by preventing its interaction with DNA. Acts by binding directly to the C-terminal domain of GyrB, which probably disrupts DNA binding by the gyrase. The sequence is that of DNA gyrase inhibitor YacG from Geotalea daltonii (strain DSM 22248 / JCM 15807 / FRC-32) (Geobacter daltonii).